The sequence spans 88 residues: Small ribosomal subunit protein uS17 (88 aa).

The protein belongs to the universal ribosomal protein uS17 family. In terms of assembly, part of the 30S ribosomal subunit.

In terms of biological role, one of the primary rRNA binding proteins, it binds specifically to the 5'-end of 16S ribosomal RNA. This chain is Small ribosomal subunit protein uS17, found in Nitrosospira multiformis (strain ATCC 25196 / NCIMB 11849 / C 71).